Consider the following 561-residue polypeptide: MPKASASSAKMTASTSNVSSSNSKLKKSKASSPSASPEVSTPSTSNSNDDQDGHVSEDMSDAEEGESQEHSASGSGISDHDDDDDPSADKDSPAADEEQDEKKVATIADDGKKVEFSDLGVIPQIVEACTNMGFKHPTPIQVKAIPEALQARDVIGLAQTGSGKTAAFTIPILQALWDNPKPFFACVLAPTRELAYQISQQVEALGSTIGVRSATIVGGMDMMSQSIALSKRPHVIVATPGRLQDHLENTKGFSLRGLQYLVMDEADRLLDMDFGPIIDKLLQSIPRERRTMLFSATMTTKVAKLQRASLKNPVRVEVDTKYTTVSTLKQHYMFMPFAHKDTYLVHLANEQAGHSIIVFTRTVHDSQRLSILLRLLGFPAIPLHGQLSQQARLGALNKFKTGGRSILVATDVASRGLDIPAVDLVVNYDIPTNSKDYIHRVGRTARAGRSGRSVTLVTQYDVELLQRIEAVIGLKMTEFPGGNDKEAVMLLSERVAEAHRAAVRELKDKGVGSAGGSGKRKRKMDGKYGDDMDRDDDQVQAGLPVSGNGRHQNQNRKKGRR.

Composition is skewed to low complexity over residues 1–23 (MPKA…SSNS) and 30–45 (ASSP…PSTS). The disordered stretch occupies residues 1-109 (MPKASASSAK…DEKKVATIAD (109 aa)). The span at 100-109 (DEKKVATIAD) shows a compositional bias: basic and acidic residues. The Q motif motif lies at 114 to 142 (VEFSDLGVIPQIVEACTNMGFKHPTPIQV). A Helicase ATP-binding domain is found at 145–316 (IPEALQARDV…RASLKNPVRV (172 aa)). 158–165 (AQTGSGKT) contacts ATP. The DEAD box motif lies at 264 to 267 (DEAD). In terms of domain architecture, Helicase C-terminal spans 339–487 (HKDTYLVHLA…EFPGGNDKEA (149 aa)). Residues 506–561 (LKDKGVGSAGGSGKRKRKMDGKYGDDMDRDDDQVQAGLPVSGNGRHQNQNRKKGRR) are disordered.

This sequence belongs to the DEAD box helicase family. DDX47/RRP3 subfamily. As to quaternary structure, interacts with the SSU processome.

It is found in the nucleus. The catalysed reaction is ATP + H2O = ADP + phosphate + H(+). In terms of biological role, ATP-dependent rRNA helicase required for pre-ribosomal RNA processing. Involved in the maturation of the 35S-pre-rRNA and to its cleavage to mature 18S rRNA. This chain is ATP-dependent rRNA helicase RRP3, found in Mycosarcoma maydis (Corn smut fungus).